Consider the following 339-residue polypeptide: Tetraacyldisaccharide 4'-kinase (339 aa).

ATP is bound at residue 44–51; it reads TVGGTGKT.

This sequence belongs to the LpxK family.

It catalyses the reaction a lipid A disaccharide + ATP = a lipid IVA + ADP + H(+). Its pathway is glycolipid biosynthesis; lipid IV(A) biosynthesis; lipid IV(A) from (3R)-3-hydroxytetradecanoyl-[acyl-carrier-protein] and UDP-N-acetyl-alpha-D-glucosamine: step 6/6. Functionally, transfers the gamma-phosphate of ATP to the 4'-position of a tetraacyldisaccharide 1-phosphate intermediate (termed DS-1-P) to form tetraacyldisaccharide 1,4'-bis-phosphate (lipid IVA). The polypeptide is Tetraacyldisaccharide 4'-kinase (Bdellovibrio bacteriovorus (strain ATCC 15356 / DSM 50701 / NCIMB 9529 / HD100)).